A 525-amino-acid polypeptide reads, in one-letter code: Protein-serine O-palmitoleoyltransferase porcupine (525 aa).

9 helical membrane passes run 83 to 103 (VMQY…LCLL), 125 to 145 (LIIL…LAAV), 159 to 179 (GAQV…LLIW), 220 to 240 (FAYL…WVSF), 260 to 280 (LLPN…VAPA), 301 to 318 (VRSS…LLVA), 395 to 415 (SLLH…AFLA), 467 to 487 (NLAF…VLLG), and 505 to 525 (QAGY…LFIS). Residue His398 is part of the active site.

Belongs to the membrane-bound acyltransferase family. Porcupine subfamily. As to quaternary structure, interacts with wg and Wnt5.

It is found in the endoplasmic reticulum membrane. It carries out the reaction [Wnt protein]-L-serine + (9Z)-hexadecenoyl-CoA = [Wnt protein]-O-(9Z)-hexadecenoyl-L-serine + CoA. Protein-serine O-palmitoleoyltransferase that acts as a key regulator of the Wnt signaling pathway by mediating the attachment of palmitoleate, a 16-carbon monounsaturated fatty acid (C16:1(9Z)), to Wnt proteins. Serine palmitoleoylation of Wnt proteins is required for efficient binding to frizzled receptors. Also facilitates the glycosylation of Wnt family members, including wg and Wnt5. The cotranslational disulfide bond formation of wg competes with the N-glycosylation. Porc stimulates the post-translational N-glycosylation by anchoring wg at the ER membrane, probably through acylation. This chain is Protein-serine O-palmitoleoyltransferase porcupine, found in Drosophila melanogaster (Fruit fly).